A 408-amino-acid polypeptide reads, in one-letter code: 3-ketoacyl-CoA thiolase A, peroxisomal (408 aa).

The active-site Acyl-thioester intermediate is the cysteine 112. Catalysis depends on proton acceptor residues histidine 366 and cysteine 394.

It belongs to the thiolase-like superfamily. Thiolase family. Homodimer.

The protein localises to the peroxisome. The catalysed reaction is an acyl-CoA + acetyl-CoA = a 3-oxoacyl-CoA + CoA. The protein operates within lipid metabolism; fatty acid metabolism. The sequence is that of 3-ketoacyl-CoA thiolase A, peroxisomal from Candida tropicalis (Yeast).